The following is a 1214-amino-acid chain: ATP-dependent helicase/nuclease subunit A (1214 aa).

The UvrD-like helicase ATP-binding domain maps to 27–483; the sequence is HKRTAQQIEA…ILLKENFRSQ (457 aa). An ATP-binding site is contributed by 48 to 55; sequence ASAGSGKT. One can recognise a UvrD-like helicase C-terminal domain in the interval 512–800; that stretch reads QLVAGSEAQK…NLMTIHKSKG (289 aa).

It belongs to the helicase family. AddA subfamily. In terms of assembly, heterodimer of AddA and AddB/RexB. The cofactor is Mg(2+).

It carries out the reaction Couples ATP hydrolysis with the unwinding of duplex DNA by translocating in the 3'-5' direction.. It catalyses the reaction ATP + H2O = ADP + phosphate + H(+). In terms of biological role, the heterodimer acts as both an ATP-dependent DNA helicase and an ATP-dependent, dual-direction single-stranded exonuclease. Recognizes the chi site generating a DNA molecule suitable for the initiation of homologous recombination. The AddA nuclease domain is required for chi fragment generation; this subunit has the helicase and 3' -&gt; 5' nuclease activities. This chain is ATP-dependent helicase/nuclease subunit A, found in Streptococcus equi subsp. zooepidemicus (strain MGCS10565).